We begin with the raw amino-acid sequence, 95 residues long: Large ribosomal subunit protein uL23 (95 aa).

This sequence belongs to the universal ribosomal protein uL23 family. As to quaternary structure, part of the 50S ribosomal subunit. Contacts protein L29.

Functionally, binds to 23S rRNA. One of the proteins that surrounds the polypeptide exit tunnel on the outside of the ribosome. The chain is Large ribosomal subunit protein uL23 from Methanopyrus kandleri (strain AV19 / DSM 6324 / JCM 9639 / NBRC 100938).